The following is a 195-amino-acid chain: Probable GTP-binding protein EngB (195 aa).

The EngB-type G domain maps to 24–195; the sequence is ELPEIALAGR…EAWDAILEKL (172 aa). GTP-binding positions include 32 to 39, 59 to 63, 77 to 80, 144 to 147, and 176 to 178; these read GRSNVGKS, GKTQL, DVPG, TKAD, and FSS. 2 residues coordinate Mg(2+): Ser39 and Thr61.

It belongs to the TRAFAC class TrmE-Era-EngA-EngB-Septin-like GTPase superfamily. EngB GTPase family. It depends on Mg(2+) as a cofactor.

Necessary for normal cell division and for the maintenance of normal septation. The protein is Probable GTP-binding protein EngB of Streptococcus pneumoniae (strain P1031).